A 143-amino-acid chain; its full sequence is Transcriptional regulator MraZ (143 aa).

SpoVT-AbrB domains lie at 5-47 and 76-119; these read QYEH…SLDE and AVEC…SKEV.

Belongs to the MraZ family. Forms oligomers.

Its subcellular location is the cytoplasm. It localises to the nucleoid. This Caldanaerobacter subterraneus subsp. tengcongensis (strain DSM 15242 / JCM 11007 / NBRC 100824 / MB4) (Thermoanaerobacter tengcongensis) protein is Transcriptional regulator MraZ.